The chain runs to 249 residues: NH(3)-dependent NAD(+) synthetase (249 aa).

29-36 (GVSGGVDS) contacts ATP. Asp-35 contributes to the Mg(2+) binding site. A deamido-NAD(+)-binding site is contributed by Arg-116. Thr-136 provides a ligand contact to ATP. Glu-141 contacts Mg(2+). Deamido-NAD(+) is bound by residues Lys-149 and Asp-156. Lys-165 and Ser-187 together coordinate ATP. Residue 233–234 (HK) participates in deamido-NAD(+) binding.

Belongs to the NAD synthetase family. Homodimer.

It catalyses the reaction deamido-NAD(+) + NH4(+) + ATP = AMP + diphosphate + NAD(+) + H(+). It participates in cofactor biosynthesis; NAD(+) biosynthesis; NAD(+) from deamido-NAD(+) (ammonia route): step 1/1. In terms of biological role, catalyzes the ATP-dependent amidation of deamido-NAD to form NAD. Uses ammonia as a nitrogen source. This is NH(3)-dependent NAD(+) synthetase from Syntrophomonas wolfei subsp. wolfei (strain DSM 2245B / Goettingen).